The chain runs to 157 residues: AM-toxin biosynthesis protein 15 (157 aa).

Residues Arg-17 to Ser-43 are disordered.

The protein operates within mycotoxin biosynthesis. In terms of biological role, part of the gene clusters that mediate the biosynthesis of AM-toxins, host-selective toxins (HSTs) causing Alternaria blotch on apple, a worldwide distributed disease. AM-toxins are cyclic depsipeptides containing the 3 residues 2-hydroxy-isovaleric acid (2-HIV), dehydroalanine, L-alanine which are common for all 3 AM-toxins I to III. The fourth precursor is L-alpha-amino-methoxyphenyl-valeric acid (L-Amv) for AM-toxin I, L-alpha-amino-phenyl-valeric acid (L-Apv) for AM-toxin II, and L-alpha-amino-hydroxyphenyl-valeric acid (L-Ahv) for AM-toxin III. AM-toxins have two target sites for affecting susceptible apple cells; they cause invagination of the plasma membrane and electrolyte loss and chloroplast disorganization. The non-ribosomal peptide synthetase AMT1 contains 4 catalytic modules and is responsible for activation of each residue in AM-toxin. The aldo-keto reductase AMT2 catalyzes the conversion of 2-keto-isovaleric acid (2-KIV) to 2-hydroxy-isovaleric acid (2-HIV), one of the precursor residues incorporated by AMT1 during AM-toxin biosynthesis, by reduction of its ketone to an alcohol. The cytochrome P450 monooxygenase AMT3 and the thioesterase AMT4 are also important for AM-toxin production, but their exact function within the AM-toxin biosynthesis are not known yet. Up to 21 proteins (including AMT1 to AMT4) are predicted to be involved in AM-toxin biosynthesis since their expression ishighly up-regulated in AM-toxin-producing cultures. The protein is AM-toxin biosynthesis protein 15 of Alternaria alternata (Alternaria rot fungus).